Here is a 206-residue protein sequence, read N- to C-terminus: U-scoloptoxin(08)-Cw1a (206 aa).

An N-terminal signal peptide occupies residues 1–24 (MIFRVNLLFSCFCFVLFVFDFSNA). The propeptide occupies 25–164 (SKYDQGSLNI…DLPELKRRKR (140 aa)). An RLWRNWE 1; approximate repeat occupies 37 to 43 (RLWRDWE). The RLWRNWE 2; approximate repeat unit spans residues 71-77 (RLWRDWE). The RLWRNWE 3; approximate repeat unit spans residues 104–110 (RLWRDWE). The stretch at 137-143 (RLWRNWE) is one RLWRNWE 4 repeat. An RLWRNWE 5; approximate repeat occupies 164–170 (RLWRNED).

Belongs to the scoloptoxin-08 family. Post-translationally, contains 3 disulfide bonds. As to expression, expressed by the venom gland.

The protein resides in the secreted. This chain is U-scoloptoxin(08)-Cw1a, found in Cormocephalus westwoodi (Westwood's green centipede).